An 88-amino-acid chain; its full sequence is N(2)-fixation sustaining protein CowN (88 aa).

Belongs to the CowN family.

Its function is as follows. Is required to sustain N(2)-dependent growth in the presence of low levels of carbon monoxide (CO). Probably acts by protecting the N(2) fixation ability of the nitrogenase complex, which is inactivated in the presence of CO. This chain is N(2)-fixation sustaining protein CowN, found in Rhodomicrobium vannielii (strain ATCC 17100 / DSM 162 / LMG 4299 / NCIMB 10020 / ATH 3.1.1).